Here is an 815-residue protein sequence, read N- to C-terminus: uncharacterized protein (815 aa).

A DNA-binding region (zn(2)-C6 fungal-type) is located at residues 31–57 (CDMCRRKKIKCDGLRPCKNCKAGKLEC). A helical membrane pass occupies residues 560-580 (YWTTVYCGFSTIVTLIFAALL). 2 disordered regions span residues 646-668 (ESNV…SNTQ) and 769-792 (DPDV…FNPT). Residues 780–792 (SSSLNNSTPFNPT) show a composition bias toward polar residues.

It is found in the cytoplasm. Its subcellular location is the nucleus membrane. This is an uncharacterized protein from Schizosaccharomyces pombe (strain 972 / ATCC 24843) (Fission yeast).